Reading from the N-terminus, the 174-residue chain is UPF0340 protein SE_1711 (174 aa).

Belongs to the UPF0340 family.

The polypeptide is UPF0340 protein SE_1711 (Staphylococcus epidermidis (strain ATCC 12228 / FDA PCI 1200)).